The chain runs to 367 residues: Popeye domain-containing protein 2 (367 aa).

Residue asparagine 4 is glycosylated (N-linked (GlcNAc...) asparagine). The next 2 membrane-spanning stretches (helical) occupy residues 36–56 (FLLM…LFGI) and 77–97 (IVLW…QLVY). Disordered regions lie at residues 273 to 292 (PSAS…ALEA) and 312 to 367 (APPA…TPEL). Residues 278–290 (GEPESEKDDEEAL) show a composition bias toward acidic residues. Positions 344–356 (PLQNSSQVMSRSQ) are enriched in polar residues. The N-linked (GlcNAc...) asparagine glycan is linked to asparagine 347. Phosphothreonine is present on threonine 364.

The protein belongs to the popeye family. As to expression, expressed in the developing and adult heart, with high expression levels in the sinus and atrioventricular nodes. Also expressed in the bladder and skeletal muscle.

It is found in the membrane. The protein localises to the cell membrane. It localises to the sarcolemma. In terms of biological role, important for the maintenance of cardiac function. Plays a regulatory function in heart rate dynamics mediated, at least in part, through cAMP-binding and, probably, by increasing cell surface expression of the potassium channel KCNK2 and enhancing current density. The chain is Popeye domain-containing protein 2 (Popdc2) from Mus musculus (Mouse).